The primary structure comprises 1556 residues: MSFQYPLLAPMTNSSVATNSNQPFLGQPWLVEERDACGVGFIANLRGKPDHTLVEQALKALGCMEHRGGCSADNDSGDGAGVMTAIPRELLAQWFNTRNLPMPDGDRLGVGMVFLPQEPSAREVARAYVEEVVRLEKLTVLGWREVPVNSDVLGIQAKNNQPHIEQILVTCPEGCAGDELDRRLYIARSIIGKKLAEDFYVCSFSCRTIVYKGMVRSIILGEFYLDLKNPGYTSNFAVYHRRFSTNTMPKWPLAQPMRLLGHNGEINTLLGNINWMAAREKELEVSGWTKAELEALTPIVNQANSDSYNLDSALELLVRTGRSPLEAAMILVPEAYKNQPALKDYPEISDFHDYYSGLQEPWDGPALLVFSDGKIVGAGLDRNGLRPARYCITKDDYIVLGSEAGVVDLPEVDIVEKGRLAPGQMIAVDLAEQKILKNYQIKQQAAQKYPYGEWIKIQRQTVASDSFAEKTLFNDAQTVLQQQAAFGYTAEDVEMVVVPMASQGKEPTFCMGDDTPLAVLSHKPRLLYDYFKQRFAQVTNPPIDPLRENLVMSLAMFLGKRGNLLEPKAESARTIKLRSPLVNEVELQAIKTGQLQVAEVSTLYDLDGVNSLETALDNLVKTAIATVQAGAEILVLTDRPNGAILTENQSFIPPLLAVGAVHHHLIRAGLRLKASLIVDTAQCWSTHHFACLVGYGASAICPYLALESVRQWWLDEKTQKLMENGRLDRIDLPTALKNYRQSVEAGLFKILSKMGISLLASYHGAQIFEAIGLGAELVEYAFAGTTSRVGGLTIADVAGEVMVFHGMAFPEMAKKLENFGFVNYRPGGEYHMNSPEMSKSLHKAVAAYKVGGNGNNGEAYDHYELYRQYLKDRPVTALRDLLDFNADQPAISLEEVESVESIVKRFCTGGMSLGALSREAHETLAIAMNRLGAKSNSGEGGEDVVRYLTLDDVDSEGNSPTLPHLHGLQNGDTANSAIKQIASGRFGVTPEYLMSGKQLEIKMAQGAKPGEGGQLPGKKVSEYIAMLRRSKPGVTLISPPPHHDIYSIEDLAQLIYDLHQINPEAQVSVKLVAEIGIGTIAAGVAKANADIIQISGHDGGTGASPLSSIKHAGSPWELGVTEVHRVLMENQLRDRVLLRADGGLKTGWDVVMAALMGAEEYGFGSIAMIAEGCIMARVCHTNNCPVGVATQQERLRQRFKGVPGQVVNFFYFIAEEVRSLLAHLGYRSLDDIIGRTDLLKVRSDVQLSKTQNLTLDCLLNLPDTKQNRQWLNHEPVHSNGPVLDDDILADPDIQEAINHQTTATKTYRLVNTDRTVGTRLSGAIAKKYGNNGFEGNITLNFQGAAGQSFGAFNLDGMTLHLQGEANDYVGKGMNGGEIVIVPHPQASFAPEDNVIIGNTCLYGATGGNLYANGRAGERFAVRNSVGKAVIEGAGDHCCEYMTGGVIVVLGPVGRNVGAGMTGGLAYFLDEVGDLPEKINPEIITLQRITASKGEEQLKSLITAHVEHTGSPKGKAILANWSDYLGKFWQAVPPSEKDSPEANGDVSLTGEKTLTSV.

C37 (for GATase activity) is an active-site residue. A Glutamine amidotransferase type-2 domain is found at C37–A431. [3Fe-4S] cluster is bound by residues C1173, C1179, and C1184. The segment at P1533–V1556 is disordered.

This sequence belongs to the glutamate synthase family. Requires [3Fe-4S] cluster as cofactor. The cofactor is FAD. It depends on FMN as a cofactor.

The catalysed reaction is 2 oxidized [2Fe-2S]-[ferredoxin] + 2 L-glutamate = L-glutamine + 2 reduced [2Fe-2S]-[ferredoxin] + 2-oxoglutarate + 2 H(+). Its pathway is amino-acid biosynthesis; L-glutamate biosynthesis via GLT pathway; L-glutamate from 2-oxoglutarate and L-glutamine (ferredoxin route): step 1/1. It functions in the pathway energy metabolism; nitrogen metabolism. The polypeptide is Ferredoxin-dependent glutamate synthase 2 (gltS) (Synechocystis sp. (strain ATCC 27184 / PCC 6803 / Kazusa)).